The chain runs to 316 residues: Small ribosomal subunit protein mS26 (316 aa).

Positions 41 to 71 (TTRSARDSVSIPPDSPNYIKVPEPPQSSEVR) are disordered.

The protein belongs to the mitochondrion-specific ribosomal protein mS26 family. As to quaternary structure, component of the mitochondrial small ribosomal subunit (mt-SSU). Mature N.crassa 74S mitochondrial ribosomes consist of a small (37S) and a large (54S) subunit. The 37S small subunit contains a 16S ribosomal RNA (16S mt-rRNA) and 32 different proteins. The 54S large subunit contains a 23S rRNA (23S mt-rRNA) and 42 different proteins.

It localises to the mitochondrion. Component of the mitochondrial ribosome (mitoribosome), a dedicated translation machinery responsible for the synthesis of mitochondrial genome-encoded proteins, including at least some of the essential transmembrane subunits of the mitochondrial respiratory chain. The mitoribosomes are attached to the mitochondrial inner membrane and translation products are cotranslationally integrated into the membrane. The chain is Small ribosomal subunit protein mS26 (pet123) from Neurospora crassa (strain ATCC 24698 / 74-OR23-1A / CBS 708.71 / DSM 1257 / FGSC 987).